The primary structure comprises 188 residues: Elongation factor P (188 aa).

The protein belongs to the elongation factor P family.

It localises to the cytoplasm. It participates in protein biosynthesis; polypeptide chain elongation. Functionally, involved in peptide bond synthesis. Stimulates efficient translation and peptide-bond synthesis on native or reconstituted 70S ribosomes in vitro. Probably functions indirectly by altering the affinity of the ribosome for aminoacyl-tRNA, thus increasing their reactivity as acceptors for peptidyl transferase. This chain is Elongation factor P, found in Rhodopseudomonas palustris (strain HaA2).